The chain runs to 497 residues: L-amino-acid oxidase BjussuLAAO-I (497 aa).

Residues 1-13 (MNVFFMFSKPGKL) form the signal peptide. Cysteine 23 and cysteine 186 are disulfide-bonded. FAD is bound by residues 56–57 (MS), 76–77 (EA), 76–80 (EASER), glutamine 84, and 100–103 (GPMR). Arginine 103 is a substrate binding site. The N-linked (GlcNAc...) asparagine glycan is linked to asparagine 185. A substrate-binding site is contributed by histidine 236. Valine 274 provides a ligand contact to FAD. Cysteine 344 and cysteine 425 are disulfide-bonded. Position 385 (tyrosine 385) interacts with substrate. FAD contacts are provided by residues glutamate 470, 477 to 482 (GWIAST), and 478 to 482 (WIAST). 477–478 (GW) serves as a coordination point for substrate.

Belongs to the flavin monoamine oxidase family. FIG1 subfamily. In terms of assembly, homodimer; non-covalently linked. FAD is required as a cofactor. As to expression, expressed by the venom gland.

The protein resides in the secreted. It carries out the reaction an L-alpha-amino acid + O2 + H2O = a 2-oxocarboxylate + H2O2 + NH4(+). The catalysed reaction is L-leucine + O2 + H2O = 4-methyl-2-oxopentanoate + H2O2 + NH4(+). It catalyses the reaction L-phenylalanine + O2 + H2O = 3-phenylpyruvate + H2O2 + NH4(+). The enzyme catalyses L-tryptophan + O2 + H2O = indole-3-pyruvate + H2O2 + NH4(+). It carries out the reaction L-methionine + O2 + H2O = 4-methylsulfanyl-2-oxobutanoate + H2O2 + NH4(+). The catalysed reaction is L-isoleucine + O2 + H2O = (S)-3-methyl-2-oxopentanoate + H2O2 + NH4(+). It catalyses the reaction L-tyrosine + O2 + H2O = 3-(4-hydroxyphenyl)pyruvate + H2O2 + NH4(+). The enzyme catalyses L-cysteine + O2 + H2O = 2-oxo-3-sulfanylpropanoate + H2O2 + NH4(+). Its function is as follows. Catalyzes an oxidative deamination of predominantly hydrophobic and aromatic L-amino acids, thus producing hydrogen peroxide that may contribute to the diverse toxic effects of this enzyme. Shows high specificity for L-Met, L-Leu, L-Phe, L-Tyr, L-Ile, L-Trp, a moderate activity on L-Cys and low activity on L-Val, L-Lys, L-Arg, L-His, L-Gln, L-Thr and L-Ser. Exhibits diverse biological activities, such as hemorrhage, hemolysis, edema, apoptosis of vascular endothelial cells or tumor cell lines, and antibacterial, as well as regulation of platelet aggregation. Effects of snake L-amino oxidases on platelets are controversial, since they either induce aggregation or inhibit agonist-induced aggregation. These different effects are probably due to different experimental conditions. In vitro, shows parasiticidal activities against both trypanosomes and leishmania, as a result of enzyme-catalyzed hydrogen peroxide production. This Bothrops jararacussu (Jararacussu) protein is L-amino-acid oxidase BjussuLAAO-I.